The primary structure comprises 525 residues: Patatin-like protein 8 (525 aa).

The interval 1 to 50 (MNRRYEKPPPLSVSSKGKKKHFVNHTAPNTPGNYERTQTSPTLSTARSHE) is disordered. Residues 26 to 46 (TAPNTPGNYERTQTSPTLSTA) are compositionally biased toward polar residues. Residues 124 to 338 (LSIDGGGMRG…AMSNPTAAAI (215 aa)) enclose the PNPLA domain. The short motif at 128 to 133 (GGGMRG) is the GXGXXG element. S168 functions as the Nucleophile in the catalytic mechanism.

Belongs to the patatin family. In terms of tissue distribution, specifically expressed in roots.

Its function is as follows. Possesses non-specific lipolytic acyl hydrolase (LAH) activity. Hydrolyzes phospholipids as well as galactolipids. May play a role in disease resistance. The sequence is that of Patatin-like protein 8 (PLP8) from Arabidopsis thaliana (Mouse-ear cress).